We begin with the raw amino-acid sequence, 148 residues long: Ubiquitin conjugating enzyme E2 B (148 aa).

One can recognise a UBC core domain in the interval 2–148; it reads AAHKRLQKEI…AKEWTKKYAK (147 aa). Cys-87 (glycyl thioester intermediate) is an active-site residue.

This sequence belongs to the ubiquitin-conjugating enzyme family. Interacts with mkkA (via F-box/WD40 repeat domains).

It carries out the reaction S-ubiquitinyl-[E1 ubiquitin-activating enzyme]-L-cysteine + [E2 ubiquitin-conjugating enzyme]-L-cysteine = [E1 ubiquitin-activating enzyme]-L-cysteine + S-ubiquitinyl-[E2 ubiquitin-conjugating enzyme]-L-cysteine.. The protein operates within protein modification; protein ubiquitination. Involved in protein ubiquitination and degradation during development. Mediates protein ubiquitination at the mound and finger stage required for subsequent development and may be an essential component of the developmental transition between the induction of postaggregative gene expression and subsequent cell-type differentiation and morphogenesis. ubcB and ubpB differentially control ubiquitination/deubiquitination and degradation of mkkA protein in a cell-type-specific and temporally regulated manner. This is Ubiquitin conjugating enzyme E2 B (ubcB) from Dictyostelium discoideum (Social amoeba).